The following is an 843-amino-acid chain: Aconitase AMT8-2 (843 aa).

258–260 (DSH) contributes to the substrate binding site. Residues Cys-450, Cys-513, and Cys-516 each contribute to the [4Fe-4S] cluster site. Residues Arg-536, Arg-541, and 712–713 (SR) each bind substrate.

The protein belongs to the aconitase/IPM isomerase family.

The protein operates within mycotoxin biosynthesis. Aconitase; part of the gene clusters that mediate the biosynthesis of AM-toxins, host-selective toxins (HSTs) causing Alternaria blotch on apple, a worldwide distributed disease. AM-toxins are cyclic depsipeptides containing the 3 residues 2-hydroxy-isovaleric acid (2-HIV), dehydroalanine, L-alanine which are common for all 3 AM-toxins I to III. The fourth precursor is L-alpha-amino-methoxyphenyl-valeric acid (L-Amv) for AM-toxin I, L-alpha-amino-phenyl-valeric acid (L-Apv) for AM-toxin II, and L-alpha-amino-hydroxyphenyl-valeric acid (L-Ahv) for AM-toxin III. AM-toxins have two target sites for affecting susceptible apple cells; they cause invagination of the plasma membrane and electrolyte loss and chloroplast disorganization. The non-ribosomal peptide synthetase AMT1 contains 4 catalytic modules and is responsible for activation of each residue in AM-toxin. The aldo-keto reductase AMT2 catalyzes the conversion of 2-keto-isovaleric acid (2-KIV) to 2-hydroxy-isovaleric acid (2-HIV), one of the precursor residues incorporated by AMT1 during AM-toxin biosynthesis, by reduction of its ketone to an alcohol. The cytochrome P450 monooxygenase AMT3 and the thioesterase AMT4 are also important for AM-toxin production, but their exact function within the AM-toxin biosynthesis are not known yet. Up to 21 proteins (including AMT1 to AMT4) are predicted to be involved in AM-toxin biosynthesis since their expression ishighly up-regulated in AM-toxin-producing cultures. The polypeptide is Aconitase AMT8-2 (Alternaria alternata (Alternaria rot fungus)).